The following is a 223-amino-acid chain: Small ribosomal subunit protein uS3 (223 aa).

The region spanning 39-107 is the KH type-2 domain; the sequence is VRSYLAKKLS…PVHINIQEIR (69 aa).

The protein belongs to the universal ribosomal protein uS3 family. In terms of assembly, part of the 30S ribosomal subunit. Forms a tight complex with proteins S10 and S14.

Binds the lower part of the 30S subunit head. Binds mRNA in the 70S ribosome, positioning it for translation. The polypeptide is Small ribosomal subunit protein uS3 (Nitrosococcus oceani (strain ATCC 19707 / BCRC 17464 / JCM 30415 / NCIMB 11848 / C-107)).